Reading from the N-terminus, the 218-residue chain is Thiamine-phosphate synthase (218 aa).

Residues 36 to 40 and Asp70 each bind 4-amino-2-methyl-5-(diphosphooxymethyl)pyrimidine; that span reads QVRSK. Mg(2+) contacts are provided by Asp71 and Asp94. Thr113 is a binding site for 4-amino-2-methyl-5-(diphosphooxymethyl)pyrimidine. 141-143 provides a ligand contact to 2-[(2R,5Z)-2-carboxy-4-methylthiazol-5(2H)-ylidene]ethyl phosphate; that stretch reads TPT. Residue Lys144 participates in 4-amino-2-methyl-5-(diphosphooxymethyl)pyrimidine binding.

Belongs to the thiamine-phosphate synthase family. Requires Mg(2+) as cofactor.

It catalyses the reaction 2-[(2R,5Z)-2-carboxy-4-methylthiazol-5(2H)-ylidene]ethyl phosphate + 4-amino-2-methyl-5-(diphosphooxymethyl)pyrimidine + 2 H(+) = thiamine phosphate + CO2 + diphosphate. The catalysed reaction is 2-(2-carboxy-4-methylthiazol-5-yl)ethyl phosphate + 4-amino-2-methyl-5-(diphosphooxymethyl)pyrimidine + 2 H(+) = thiamine phosphate + CO2 + diphosphate. It carries out the reaction 4-methyl-5-(2-phosphooxyethyl)-thiazole + 4-amino-2-methyl-5-(diphosphooxymethyl)pyrimidine + H(+) = thiamine phosphate + diphosphate. It participates in cofactor biosynthesis; thiamine diphosphate biosynthesis; thiamine phosphate from 4-amino-2-methyl-5-diphosphomethylpyrimidine and 4-methyl-5-(2-phosphoethyl)-thiazole: step 1/1. Condenses 4-methyl-5-(beta-hydroxyethyl)thiazole monophosphate (THZ-P) and 2-methyl-4-amino-5-hydroxymethyl pyrimidine pyrophosphate (HMP-PP) to form thiamine monophosphate (TMP). The sequence is that of Thiamine-phosphate synthase from Corynebacterium jeikeium (strain K411).